The primary structure comprises 150 residues: Large ribosomal subunit protein eL19 (150 aa).

Residues 56 to 89 (KGQSRARARAFQEARKKGRHRGPGSKKGKKTARM) form a disordered region. Residues 71–89 (KKGRHRGPGSKKGKKTARM) are compositionally biased toward basic residues.

The protein belongs to the eukaryotic ribosomal protein eL19 family. In terms of assembly, part of the 50S ribosomal subunit.

In terms of biological role, binds to the 23S rRNA. The chain is Large ribosomal subunit protein eL19 from Thermococcus kodakarensis (strain ATCC BAA-918 / JCM 12380 / KOD1) (Pyrococcus kodakaraensis (strain KOD1)).